We begin with the raw amino-acid sequence, 206 residues long: 2,3-bisphosphoglycerate-dependent phosphoglycerate mutase (206 aa).

Substrate is bound by residues 9-16 (RHGQSEWN), 22-23 (TG), Arg61, 88-91 (ERDY), Lys99, 115-116 (RR), and 159-160 (GN). The active-site Tele-phosphohistidine intermediate is the His10. Glu88 serves as the catalytic Proton donor/acceptor.

It belongs to the phosphoglycerate mutase family. BPG-dependent PGAM subfamily. Homodimer.

The enzyme catalyses (2R)-2-phosphoglycerate = (2R)-3-phosphoglycerate. The protein operates within carbohydrate degradation; glycolysis; pyruvate from D-glyceraldehyde 3-phosphate: step 3/5. Functionally, catalyzes the interconversion of 2-phosphoglycerate and 3-phosphoglycerate. The polypeptide is 2,3-bisphosphoglycerate-dependent phosphoglycerate mutase (Brucella melitensis biotype 2 (strain ATCC 23457)).